The primary structure comprises 410 residues: Histone-lysine N-methyltransferase SUV39H2 (410 aa).

Positions 47-105 constitute a Chromo domain; the sequence is YEVEYLCDYKVVKDMEYYLVKWKGWPDSTNTWEPLQNLKCPLLLQQFSNDKHNYLSQVK. Residues 189–247 form the Pre-SET domain; it reads FGCSCTDCFFQKCCPAEAGVLLAYNKNQQIKIPPGTPIYECNSRCQCGPDCPNRIVQKG. Residues C191, C193, C196, C201, C202, C229, C233, C235, and C239 each contribute to the Zn(2+) site. Residues 250–373 form the SET domain; the sequence is YSLCIFRTSN…AGEELTFDYQ (124 aa). S-adenosyl-L-methionine contacts are provided by residues 261–263, Y304, and 330–331; these read RGW and NH. Zn(2+) is bound at residue C333. Phosphoserine occurs at positions 381, 384, and 388. A Post-SET domain is found at 394–410; the sequence is VRTVCKCGAVTCRGYLN. Residues C398, C400, and C405 each contribute to the Zn(2+) site.

It belongs to the class V-like SAM-binding methyltransferase superfamily. Histone-lysine methyltransferase family. Suvar3-9 subfamily. In terms of assembly, interacts with SMAD5. The large PER complex involved in the histone methylation is composed of at least PER2, CBX3, TRIM28, SUV39H1 and/or SUV39H2; CBX3 mediates the formation of the complex. Ubiquitinated by the DCX(DCAF13) E3 ubiquitin ligase complex, leading to its degradation.

Its subcellular location is the nucleus. The protein resides in the chromosome. It localises to the centromere. The catalysed reaction is L-lysyl(9)-[histone H3] + 3 S-adenosyl-L-methionine = N(6),N(6),N(6)-trimethyl-L-lysyl(9)-[histone H3] + 3 S-adenosyl-L-homocysteine + 3 H(+). Functionally, histone methyltransferase that specifically trimethylates 'Lys-9' of histone H3 using monomethylated H3 'Lys-9' as substrate. H3 'Lys-9' trimethylation represents a specific tag for epigenetic transcriptional repression by recruiting HP1 (CBX1, CBX3 and/or CBX5) proteins to methylated histones. Mainly functions in heterochromatin regions, thereby playing a central role in the establishment of constitutive heterochromatin at pericentric and telomere regions. H3 'Lys-9' trimethylation is also required to direct DNA methylation at pericentric repeats. SUV39H1 is targeted to histone H3 via its interaction with RB1 and is involved in many processes, such as cell cycle regulation, transcriptional repression and regulation of telomere length. May participate in regulation of higher-order chromatin organization during spermatogenesis. Recruited by the large PER complex to the E-box elements of the circadian target genes such as PER2 itself or PER1, contributes to the conversion of local chromatin to a heterochromatin-like repressive state through H3 'Lys-9' trimethylation. The chain is Histone-lysine N-methyltransferase SUV39H2 (SUV39H2) from Macaca fascicularis (Crab-eating macaque).